The following is a 99-amino-acid chain: Ferredoxin (99 aa).

One can recognise a 2Fe-2S ferredoxin-type domain in the interval 4–96 (YKIHLLCEEE…DCTISTHVEQ (93 aa)). 4 residues coordinate [2Fe-2S] cluster: Cys-42, Cys-47, Cys-50, and Cys-80.

Belongs to the 2Fe2S plant-type ferredoxin family. Forms a complex with heterodimeric ferredoxin-thioredoxin reductase (FTR) and thioredoxin. [2Fe-2S] cluster serves as cofactor.

It is found in the plastid. The protein resides in the chloroplast. In terms of biological role, ferredoxins are iron-sulfur proteins that transfer electrons in a wide variety of metabolic reactions. This chain is Ferredoxin (petF), found in Pyropia yezoensis (Susabi-nori).